Consider the following 238-residue polypeptide: Transmembrane protein 127 (238 aa).

Position 1 is an N-acetylmethionine (M1). Residues 1-11 are compositionally biased toward gly residues; sequence MYAPGGAGLPG. The segment at 1 to 27 is disordered; that stretch reads MYAPGGAGLPGGRRRRSPGSSALPKQP. S17 is subject to Phosphoserine. The next 3 membrane-spanning stretches (helical) occupy residues 96–116, 130–150, and 169–189; these read IAAF…LDVF, AFAH…SYWA, and VYVT…ASIL.

This sequence belongs to the TMEM127 family.

Its subcellular location is the cell membrane. It localises to the cytoplasm. Functionally, controls cell proliferation acting as a negative regulator of TOR signaling pathway mediated by mTORC1. May act as a tumor suppressor. This Mus musculus (Mouse) protein is Transmembrane protein 127 (Tmem127).